Consider the following 273-residue polypeptide: MSIVKEAHNVKVLGSGEKTIVLGHGFGTDQSVWKHLVPYLIDEYRVVLYDNMGAGPTNPDYFDFHRYSSLEGYAYDLLSILEELEIKCCIYLGHSSSAMTGVVASIFRPDLFSKLILVSASPRFLNTDDYYGGFELEEIDQLCQAMESNYKAWIAGFAPLVVGGDMDSVAVQEFSRTLFNMRPDIALSVFRTVFTFDLRHFLSQVTVPCHIIQSSLDVAVPVAVSQYLHQNLGGMSIVEIISTEGADCFGSYRRGSEMETKRGSDDAVTIALR.

Catalysis depends on S95, which acts as the Nucleophile. D217 is an active-site residue.

This sequence belongs to the AB hydrolase superfamily. Expressed in stigma.

It localises to the nucleus. The protein localises to the cytoplasm. May be involved in plant olfaction during volatile communication. This Petunia hybrida (Petunia) protein is Karrikin insensitive 2 receptor B.